Here is a 784-residue protein sequence, read N- to C-terminus: Cadherin-15 (784 aa).

An N-terminal signal peptide occupies residues Met1–Ala21. A propeptide spanning residues Val22 to Arg59 is cleaved from the precursor. 5 Cadherin domains span residues Leu60–Phe151, Leu152–Phe259, Thr260–Phe374, Pro375–Pro480, and Ala481–Pro589. Residues Leu60–Ala605 are Extracellular-facing. Asn106 and Asn226 each carry an N-linked (GlcNAc...) asparagine glycan. N-linked (GlcNAc...) asparagine glycosylation is found at Asn530, Asn537, and Asn575. Residues Leu606–Leu625 traverse the membrane as a helical segment. Topologically, residues Arg626–Gln784 are cytoplasmic. A disordered region spans residues Glu676–Gln700.

Skeletal muscle.

It localises to the cell membrane. Cadherins are calcium-dependent cell adhesion proteins. They preferentially interact with themselves in a homophilic manner in connecting cells; cadherins may thus contribute to the sorting of heterogeneous cell types. M-cadherin is part of the myogenic program and may provide a trigger for terminal muscle differentiation. This is Cadherin-15 (Cdh15) from Mus musculus (Mouse).